Consider the following 419-residue polypeptide: Menaquinone reductase, integral membrane subunit (419 aa).

10 helical membrane passes run 23–43 (LSKFMMWMAFVFVFFGWGLYA), 61–81 (FGFGLWITFDLAVIALGAGAF), 98–118 (IINLAVIIGFLCYSGAMLVLV), 143–163 (VIFCITCYCLVLIIEYVPLIL), 176–196 (AVAHNFHVMMPLFAGIGAFLS), 221–241 (FFIWPWTFFLYVLSAVGSGPV), 270–290 (IAGTMLMVYLIFKFADTYAWA), 316–336 (LWAELFYCGLVPAIILIVPAL), 341–361 (VLFYSAAILDCIGITINRYVM), and 383–403 (WAEWGASVMIVAYAALVLSLS).

Belongs to the NrfD family. In terms of assembly, the Qrc complex is composed of four subunits: QrcA, QrcB, QrcC and QrcD. Can form a supercomplex with the [NiFe] hydrogenase HynA1 and the tetraheme Type I cytochrome c3 TpIc(3), its physiological electron donors.

It localises to the cell inner membrane. Component of the respiratory Qrc complex, that catalyzes the reduction of the menaquinone pool using electrons transferred from the reduced periplasmic cytochrome c3, and which is probably involved in sulfate respiration. Is likely essential for growth on H(2) or formate since the periplasmic hydrogenases and/or formate dehydrogenases act as primary electron donors for the Qrc complex. The QrcD subunit anchors the protein complex to the membrane and likely interacts with the quinone pool. This is Menaquinone reductase, integral membrane subunit from Nitratidesulfovibrio vulgaris (strain ATCC 29579 / DSM 644 / CCUG 34227 / NCIMB 8303 / VKM B-1760 / Hildenborough) (Desulfovibrio vulgaris).